The primary structure comprises 475 residues: Ribulose bisphosphate carboxylase large chain (475 aa).

Residues 1 to 2 (MS) constitute a propeptide that is removed on maturation. At Pro-3 the chain carries N-acetylproline. Positions 123 and 173 each coordinate substrate. The Proton acceptor role is filled by Lys-175. Lys-177 provides a ligand contact to substrate. Residues Lys-201, Asp-203, and Glu-204 each contribute to the Mg(2+) site. An N6-carboxylysine modification is found at Lys-201. The active-site Proton acceptor is His-294. Residues Arg-295, His-327, and Ser-379 each coordinate substrate.

The protein belongs to the RuBisCO large chain family. Type I subfamily. Heterohexadecamer of 8 large chains and 8 small chains; disulfide-linked. The disulfide link is formed within the large subunit homodimers. Mg(2+) serves as cofactor. In terms of processing, the disulfide bond which can form in the large chain dimeric partners within the hexadecamer appears to be associated with oxidative stress and protein turnover.

It is found in the plastid. Its subcellular location is the chloroplast. The catalysed reaction is 2 (2R)-3-phosphoglycerate + 2 H(+) = D-ribulose 1,5-bisphosphate + CO2 + H2O. It carries out the reaction D-ribulose 1,5-bisphosphate + O2 = 2-phosphoglycolate + (2R)-3-phosphoglycerate + 2 H(+). Its function is as follows. RuBisCO catalyzes two reactions: the carboxylation of D-ribulose 1,5-bisphosphate, the primary event in carbon dioxide fixation, as well as the oxidative fragmentation of the pentose substrate in the photorespiration process. Both reactions occur simultaneously and in competition at the same active site. This is Ribulose bisphosphate carboxylase large chain from Gnetum parvifolium (Small-leaved jointfir).